A 217-amino-acid polypeptide reads, in one-letter code: Small ribosomal subunit protein uS3 (217 aa).

Residues 38–106 (IRNFIKKELA…QVHINIIEIK (69 aa)) enclose the KH type-2 domain.

The protein belongs to the universal ribosomal protein uS3 family. Part of the 30S ribosomal subunit. Forms a tight complex with proteins S10 and S14.

In terms of biological role, binds the lower part of the 30S subunit head. Binds mRNA in the 70S ribosome, positioning it for translation. The polypeptide is Small ribosomal subunit protein uS3 (Streptococcus suis (strain 98HAH33)).